The chain runs to 467 residues: Putative ankyrin repeat protein R911 (467 aa).

ANK repeat units lie at residues 38–70 (IKTD…PIIV), 79–108 (TLNK…DIRA), 109–138 (GNDY…DIRA), 140–168 (NDYA…NIRA), 170–198 (NDHA…DIRS), 199–228 (DNDY…NIRS), 229–258 (DNDY…DIKS), 260–288 (NDYA…NIRV), 289–318 (NNNY…DIIA), 320–348 (NNFA…DIKS), 350–378 (NDYA…DIRV), 379–408 (ENDY…DIRS), 410–438 (NDYA…DIKA), and 440–467 (DDYA…AVLS).

This is Putative ankyrin repeat protein R911 from Acanthamoeba polyphaga mimivirus (APMV).